The following is a 490-amino-acid chain: Nuclear transcription factor Y subunit beta (490 aa).

A disordered region spans residues 1-48; sequence MSGNEDFIYDDNSSSSISNQTDGGGGGGSSNNNSGGNANNNNNEGDRE. The segment covering 30-43 has biased composition (low complexity); sequence SNNNSGGNANNNNN. A DNA-binding region spans residues 53 to 59; it reads LPIANII. The interval 80-91 is subunit association domain (SAD); that stretch reads VQDCVSEFISFI. Disordered regions lie at residues 139 to 195 and 221 to 264; these read EKNS…QQQQ and QQQQ…NQQY. A compositionally biased stretch (low complexity) spans 181–195; that stretch reads QQQQQPPQVQQQQQQ. Residues 188–219 are a coiled coil; the sequence is QVQQQQQQQQQQQQQQLQQQQQLQQHQQQQLQ. A coiled-coil region spans residues 269–307; that stretch reads QQQQQQQQQQQQQQQQQQQQQQQQQQQQQQQQQQQQQVQ. Disordered regions lie at residues 325-370 and 399-490; these read NQQA…QHLQ and QFSN…PSTS. Over residues 399-468 the composition is skewed to low complexity; it reads QFSNNNNNNN…GNSLHNSGNS (70 aa). Polar residues predominate over residues 478-490; sequence PYISTNPEYPSTS.

Belongs to the NFYB/HAP3 subunit family. As to quaternary structure, heterotrimeric transcription factor composed of three components, nfyA, nfyB and nfyC. nfyB and nfyC must interact and dimerize for nfyA association and DNA binding.

It localises to the nucleus. In terms of biological role, component of the NF-Y/HAP transcription factor complex. The NF-Y complex stimulates the transcription of various genes by recognizing and binding to a CCAAT motif in promoters. The sequence is that of Nuclear transcription factor Y subunit beta (nfyB) from Dictyostelium discoideum (Social amoeba).